We begin with the raw amino-acid sequence, 955 residues long: Isoleucine--tRNA ligase (955 aa).

Positions 60–70 (PYANGDLHIGH) match the 'HIGH' region motif. Glutamate 563 is an L-isoleucyl-5'-AMP binding site. A 'KMSKS' region motif is present at residues 604-608 (KMSKS). Lysine 607 lines the ATP pocket. Cysteine 926, cysteine 929, cysteine 946, and cysteine 949 together coordinate Zn(2+).

This sequence belongs to the class-I aminoacyl-tRNA synthetase family. IleS type 1 subfamily. As to quaternary structure, monomer. The cofactor is Zn(2+).

Its subcellular location is the cytoplasm. It carries out the reaction tRNA(Ile) + L-isoleucine + ATP = L-isoleucyl-tRNA(Ile) + AMP + diphosphate. Catalyzes the attachment of isoleucine to tRNA(Ile). As IleRS can inadvertently accommodate and process structurally similar amino acids such as valine, to avoid such errors it has two additional distinct tRNA(Ile)-dependent editing activities. One activity is designated as 'pretransfer' editing and involves the hydrolysis of activated Val-AMP. The other activity is designated 'posttransfer' editing and involves deacylation of mischarged Val-tRNA(Ile). The sequence is that of Isoleucine--tRNA ligase from Cyanothece sp. (strain PCC 7425 / ATCC 29141).